The following is a 214-amino-acid chain: MAMRQYAAATAASSSFRARPRARPSCLPAAALPLAPCCGVAWSRASYRRASVRAMGAASSSSSSSSSSPSPQGQAQAQAQGKPNYSTSLTDEEWRKRLTKDQYYITRQKGTERAFTGEYWNTKTPGIYHCVCCDTPLFESSTKFDSGTGWPSYYQPIGDNVKCKLDMSIIFMPRTEVLCAVCDAHLGHVFDDGPRPTGKRYCINSASLKLKKTQ.

The N-terminal 53 residues, 1 to 53, are a transit peptide targeting the chloroplast; the sequence is MAMRQYAAATAASSSFRARPRARPSCLPAAALPLAPCCGVAWSRASYRRASVR. The segment covering 58 to 81 has biased composition (low complexity); it reads ASSSSSSSSSSPSPQGQAQAQAQG. The tract at residues 58-91 is disordered; it reads ASSSSSSSSSSPSPQGQAQAQAQGKPNYSTSLTD. Residues 91-213 enclose the MsrB domain; it reads DEEWRKRLTK…NSASLKLKKT (123 aa). Zn(2+) contacts are provided by Cys-130, Cys-133, Cys-179, and Cys-182. Cys-202 functions as the Nucleophile in the catalytic mechanism.

Belongs to the MsrB Met sulfoxide reductase family. It depends on Zn(2+) as a cofactor. Expressed in leaves and flowers.

It localises to the plastid. The protein localises to the chloroplast. It catalyses the reaction L-methionyl-[protein] + [thioredoxin]-disulfide + H2O = L-methionyl-(R)-S-oxide-[protein] + [thioredoxin]-dithiol. Its function is as follows. Catalyzes the reduction of methionine sulfoxide (MetSO) to methionine in proteins. Involved in abiotic stress response. Plays a protective role against oxidative stress by restoring activity to proteins that have been inactivated by methionine oxidation. MSRB family specifically reduces the MetSO R-enantiomer. In Oryza sativa subsp. japonica (Rice), this protein is Peptide methionine sulfoxide reductase B1, chloroplastic.